The primary structure comprises 351 residues: Modulator of apoptosis 1 (351 aa).

The LIR signature appears at 49-52 (YRLL). A BH3-like region spans residues 120-127 (LTRALAHE). Residues 202–205 (KRRR) are RASSF1-binding.

This sequence belongs to the PNMA family. Homodimer. Under normal circumstances, held in an inactive conformation by an intramolecular interaction. Interacts with BAX. Binding to RASSF1 isoform A (RASSF1A) relieves this inhibitory interaction and allows further binding to BAX. Also binds to BCL2 and BCLX. Recruited to the TNFRSF1A and TNFRSF10A complexes in response to their respective cognate ligand, after internalization. Interacts with TRIM39. Interacts with RASSF6. Interacts with ATG8 proteins MAP1LC3A, MAP1LC3B and MAP1LC3C. Does not interact with ATG8 proteins GABARAPL1, GABARAPL2 and GABARAP. Interacts with SQSTM1; promoting dissociation of SQSTM1 inclusion bodies that sequester KEAP1. Ubiquitinated and degraded during mitotic exit by APC/C-Cdh1, this modification is inhibited by TRIM39.

It localises to the cytoplasm. The protein localises to the cytosol. The protein resides in the mitochondrion outer membrane. It is found in the extracellular vesicle membrane. Its function is as follows. Retrotransposon-derived protein that forms virion-like capsids. Acts as an effector of BAX during apoptosis: enriched at outer mitochondria membrane and associates with BAX upon induction of apoptosis, facilitating BAX-dependent mitochondrial outer membrane permeabilization and apoptosis. Required for death receptor-dependent apoptosis. When associated with RASSF1, promotes BAX conformational change and translocation to mitochondrial membranes in response to TNF and TNFSF10 stimulation. Also promotes autophagy: promotes phagophore closure via association with ATG8 proteins. Acts as an inhibitor of the NFE2L2/NRF2 pathway via interaction with SQSTM1: interaction promotes dissociation of SQSTM1 inclusion bodies that sequester KEAP1, relieving inactivation of the BCR(KEAP1) complex. The sequence is that of Modulator of apoptosis 1 from Macaca fascicularis (Crab-eating macaque).